The following is a 519-amino-acid chain: Pleckstrin homology domain-containing family A member 8 (519 aa).

Positions 1–93 (MEGVLYKWTN…WLVALGSAKA (93 aa)) constitute a PH domain. Phosphothreonine is present on Thr139. The residue at position 145 (Ser145) is a Phosphoserine. Thr153 carries the post-translational modification Phosphothreonine. The interval 310–519 (TFFSTMNTSF…VHGLESDEVV (210 aa)) is glycolipid transfer protein homology domain.

Homodimer. Interacts with ARF1; the interaction together with phosphatidylinositol 4-phosphate binding is required for FAPP2 GlcCer transfer ability. In terms of tissue distribution, expressed in kidney cell lines.

It localises to the golgi apparatus. It is found in the trans-Golgi network membrane. The protein resides in the membrane. In terms of biological role, cargo transport protein that is required for apical transport from the Golgi complex. Transports AQP2 from the trans-Golgi network (TGN) to sites of AQP2 phosphorylation. Mediates the non-vesicular transport of glucosylceramide (GlcCer) from the trans-Golgi network (TGN) to the plasma membrane and plays a pivotal role in the synthesis of complex glycosphingolipids. Binding of both phosphatidylinositol 4-phosphate (PIP) and ARF1 are essential for the GlcCer transfer ability. Also required for primary cilium formation, possibly by being involved in the transport of raft lipids to the apical membrane, and for membrane tubulation. This is Pleckstrin homology domain-containing family A member 8 (PLEKHA8) from Homo sapiens (Human).